The sequence spans 204 residues: Quinol oxidase subunit 3 (204 aa).

6 consecutive transmembrane segments (helical) span residues 27 to 47 (FWIFLGAEIVLFSTLFATFFV), 66 to 86 (LVMIMTFLLLISSFTCGIAVH), 95 to 115 (GVVIWTIITLLLGAGFVGCEI), 118 to 138 (FVHYVHEGAALSTSAFWSGFF), 140 to 160 (LLGTHGTHVTIGIFWITGILI), and 184 to 204 (FLDVVWIFIFTGVYLMGLGGL).

The protein belongs to the cytochrome c oxidase subunit 3 family.

The protein localises to the cell membrane. The enzyme catalyses 2 a quinol + O2 = 2 a quinone + 2 H2O. Catalyzes quinol oxidation with the concomitant reduction of oxygen to water. Major component for energy conversion during vegetative growth. The chain is Quinol oxidase subunit 3 (qoxC) from Bacillus subtilis (strain 168).